Here is a 563-residue protein sequence, read N- to C-terminus: Arginine--tRNA ligase (563 aa).

A 'HIGH' region motif is present at residues 121–131 (PNIAKPMSMGH).

Belongs to the class-I aminoacyl-tRNA synthetase family. Monomer.

It localises to the cytoplasm. The enzyme catalyses tRNA(Arg) + L-arginine + ATP = L-arginyl-tRNA(Arg) + AMP + diphosphate. The polypeptide is Arginine--tRNA ligase (Leuconostoc mesenteroides subsp. mesenteroides (strain ATCC 8293 / DSM 20343 / BCRC 11652 / CCM 1803 / JCM 6124 / NCDO 523 / NBRC 100496 / NCIMB 8023 / NCTC 12954 / NRRL B-1118 / 37Y)).